A 227-amino-acid chain; its full sequence is Transmembrane emp24 domain-containing protein 1 (227 aa).

The signal sequence occupies residues 1–23; the sequence is MMAAGAALALALWLLMPPVGVGG. The Extracellular segment spans residues 24-194; sequence AGPPPIQDGE…LQEGNLERVN (171 aa). The region spanning 43 to 125 is the GOLD domain; the sequence is KQCFYQSAPA…EKLVFFELIF (83 aa). A coiled-coil region spans residues 145-170; the sequence is EMLDVKMEDIKESIETMRTRLERSIQ. The chain crosses the membrane as a helical span at residues 195–215; sequence FWSAVNVAVLLLVAVLQVCTL. Residues 216 to 227 lie on the Cytoplasmic side of the membrane; sequence KRFFQDKRPVPT. Residues 218–219 carry the COPII vesicle coat-binding motif; sequence FF. Residues 218–227 carry the COPI vesicle coat-binding motif; that stretch reads FFQDKRPVPT.

Belongs to the EMP24/GP25L family. In terms of assembly, homodimer in endoplasmic reticulum, endoplasmic reticulum-Golgi intermediate compartment and cis-Golgi network. Interacts with IL1RL1. Interacts with RNF26; this interaction is important to modulate innate immune signaling through the cGAS-STING pathway.

Its subcellular location is the cell membrane. The protein resides in the endoplasmic reticulum membrane. It localises to the golgi apparatus. It is found in the cis-Golgi network membrane. The protein localises to the endoplasmic reticulum-Golgi intermediate compartment membrane. In terms of biological role, potential role in vesicular protein trafficking, mainly in the early secretory pathway. May act as a cargo receptor at the lumenal side for incorporation of secretory cargo molecules into transport vesicles and may be involved in vesicle coat formation at the cytoplasmic side. Plays a positive role in IL-33-mediated IL-8 and IL-6 production by interacting with interleukin-33 receptor IL1RL1. Plays also a role in the modulation of innate immune signaling through the cGAS-STING pathway by interacting with RNF26. The polypeptide is Transmembrane emp24 domain-containing protein 1 (TMED1) (Pongo abelii (Sumatran orangutan)).